The primary structure comprises 241 residues: 1-(5-phosphoribosyl)-5-[(5-phosphoribosylamino)methylideneamino] imidazole-4-carboxamide isomerase (241 aa).

Residue D8 is the Proton acceptor of the active site. D130 acts as the Proton donor in catalysis.

This sequence belongs to the HisA/HisF family.

It localises to the cytoplasm. It carries out the reaction 1-(5-phospho-beta-D-ribosyl)-5-[(5-phospho-beta-D-ribosylamino)methylideneamino]imidazole-4-carboxamide = 5-[(5-phospho-1-deoxy-D-ribulos-1-ylimino)methylamino]-1-(5-phospho-beta-D-ribosyl)imidazole-4-carboxamide. Its pathway is amino-acid biosynthesis; L-histidine biosynthesis; L-histidine from 5-phospho-alpha-D-ribose 1-diphosphate: step 4/9. This is 1-(5-phosphoribosyl)-5-[(5-phosphoribosylamino)methylideneamino] imidazole-4-carboxamide isomerase from Leptospira borgpetersenii serovar Hardjo-bovis (strain JB197).